The sequence spans 436 residues: Glutamate-1-semialdehyde 2,1-aminomutase (436 aa).

Lys276 carries the N6-(pyridoxal phosphate)lysine modification.

It belongs to the class-III pyridoxal-phosphate-dependent aminotransferase family. HemL subfamily. Homodimer. Pyridoxal 5'-phosphate is required as a cofactor.

It localises to the cytoplasm. The enzyme catalyses (S)-4-amino-5-oxopentanoate = 5-aminolevulinate. It functions in the pathway porphyrin-containing compound metabolism; protoporphyrin-IX biosynthesis; 5-aminolevulinate from L-glutamyl-tRNA(Glu): step 2/2. It participates in porphyrin-containing compound metabolism; chlorophyll biosynthesis. This Synechococcus sp. (strain JA-2-3B'a(2-13)) (Cyanobacteria bacterium Yellowstone B-Prime) protein is Glutamate-1-semialdehyde 2,1-aminomutase.